A 209-amino-acid chain; its full sequence is MVSDNSGNLYIVAAPSGGGKTSLVKKLIEMVGEIEVSVSHTTRPMRPGEKEGVDYFFIDEEQFISMVNEGAFIEHAKVFNHWYGTSVAQINKRLQFGIDVVLDIDWQGAEQIRHSYPDAVSVFIIPPSLDTLKERLMNRRQDKDNVISERMTKAQDELGHYPEFDYLIVNDDFEKAAMELQSIVIANRLRIEKQVNKQAKLLSFLLSSQ.

In terms of domain architecture, Guanylate kinase-like spans 7–185 (GNLYIVAAPS…AAMELQSIVI (179 aa)). 14-21 (APSGGGKT) is an ATP binding site.

It belongs to the guanylate kinase family.

It localises to the cytoplasm. The catalysed reaction is GMP + ATP = GDP + ADP. Essential for recycling GMP and indirectly, cGMP. This Legionella pneumophila (strain Paris) protein is Guanylate kinase.